The chain runs to 466 residues: Glutamyl-tRNA reductase (466 aa).

Residues 47 to 50 (TCNR), Ser107, 112 to 114 (EQQ), and Gln118 each bind substrate. Cys48 acts as the Nucleophile in catalysis. 194–199 (GAGAMS) is a binding site for NADP(+).

The protein belongs to the glutamyl-tRNA reductase family. As to quaternary structure, homodimer.

It catalyses the reaction (S)-4-amino-5-oxopentanoate + tRNA(Glu) + NADP(+) = L-glutamyl-tRNA(Glu) + NADPH + H(+). It functions in the pathway porphyrin-containing compound metabolism; protoporphyrin-IX biosynthesis; 5-aminolevulinate from L-glutamyl-tRNA(Glu): step 1/2. Functionally, catalyzes the NADPH-dependent reduction of glutamyl-tRNA(Glu) to glutamate 1-semialdehyde (GSA). The polypeptide is Glutamyl-tRNA reductase (Corynebacterium efficiens (strain DSM 44549 / YS-314 / AJ 12310 / JCM 11189 / NBRC 100395)).